The sequence spans 1262 residues: MAFDNFEILYKETRLNLEPASPSSVVQLRVAPTNAYGRSSLSSSSSSRPASATADDEKGYRTKNLATASSIYYRKHHSSPRGFLWRVLDNNTVLSIRVADVCRQEKVADAPLILNLRFASPLRPACVGFADHEDHDALFVYAIDQSNQLWSIILRPDHFRKRSATEGGLGDASRVYSPPGFGFKHPHRLAVVSPDQLIVTMHDGGILKFDRNKNHESHGSPWRESIYNVAGWGQSLRGLVPFQRNPTVRYEKINMELTAAASTAVTTMGHAETAFLFTICLDHRMRVWDVRTGQILYTGDILNNTKRDPQEVGKWTVDPSQNNLIRILDNGRGQCLVVTYSPVGAGEFKFWKVKANDQGSIHVTDCFPDARLMSPNPTSLDVWTLADFAIAQQPDGPELWALWKNNTSYRVNRLQIIPRNATAPFADGWKAVCVESPGPTPRASGSWNPTDSTEKWLDLIFSPGRFSKSTLETALAMYEKGLGTYKETVSRSGKGIAESICSVIGSTTTLDRSSQGGADYDQFRNTSETQWMRFWRLLLELDKQRGEALSLVFDQYDGMVWVTCADLLAAVRQCSDLERLYHNLQSPEKKNEDVAALISAGLTFVETFSDSMHQLCKAALRAELYENSALSDRERMQLFLDRAGFWVTDEDWAQVLDIVGQNYQMVTSRLYEDLFDLITATSEANSQELREPFTIFGKKVVVRAVQETVELHWQILFSQLILLVNMVDSESEEARPLHTRFDVGSVYRRLIDALRRLEHLRWMTKTELSVSPSKSRSGSSSPTLSKRGQDESYTRTALEELAGHLFGLPESNNMPLLSSITDLVLDLCAPTSTTVLNTWLIQCWLLKEGRPDLALELMPFAEQDPFSTYVQGRVFLALRDYDTAAQHFRKAAIGLSIPLKHVDRHSAGLLDDTEWNLLNSGLPNYYAHIVNLYDKQKAYSYVMEFSRLALQFAQTSNQDSASIKTEMLSRLFTASTATSHFEEAHSALLAMDDEALQKSYLRKLLERMCESGQSSELISLPFSGLQNKVDEILAEKCRATRDVLNGVPYHQILYAWRISHNDYRGAAAILLDRLEKLRRSGEGDKLGAEDGENGAGNDALDTQVTRQYLIVINALSCVAPQEAYILEDVPPPVPGKGTNDEEYSQTGSKRKLGKLNATSGEEDLDSRIEELARLLDSESAGDKKARPSSSSEEDQQLLERMQKFSTAVRQEQGQQTPRRLLRLEDLRKQYQQELDRIVAIQNNQFALTADGEDEDEDMMDIA.

Disordered stretches follow at residues Tyr36 to Lys58, Val770 to Glu791, and Asp1128 to Gln1196. A compositionally biased stretch (low complexity) spans Val770–Lys786. The segment covering Asp1165–Ala1185 has biased composition (basic and acidic residues).

As to quaternary structure, component of the nuclear pore complex (NPC). The nuclear pore complex (NPC) constitutes the exclusive means of nucleocytoplasmic transport. NPCs allow the passive diffusion of ions and small molecules and the active, nuclear transport receptor-mediated bidirectional transport of macromolecules such as proteins, RNAs, ribonucleoparticles (RNPs), and ribosomal subunits across the nuclear envelope. Due to its 8-fold rotational symmetry, all subunits are present with 8 copies or multiples thereof.

The protein localises to the nucleus. It localises to the nuclear pore complex. The protein resides in the nucleus membrane. Its function is as follows. Functions as a component of the nuclear pore complex (NPC). NPC components, collectively referred to as nucleoporins (NUPs), can play the role of both NPC structural components and of docking or interaction partners for transiently associated nuclear transport factors. NUP120 is involved in nuclear poly(A)+ RNA and pre-ribosome export, in GSP1 nuclear import, in NPC assembly and distribution, as well as in nuclear envelope organization. The protein is Nucleoporin NUP120 (NUP120) of Chaetomium thermophilum (strain DSM 1495 / CBS 144.50 / IMI 039719) (Thermochaetoides thermophila).